A 345-amino-acid polypeptide reads, in one-letter code: Very-long-chain 3-oxoacyl-CoA reductase (345 aa).

Residues 26 to 46 (GAAVLLTTGTLFIASRVLTFV) traverse the membrane as a helical segment. NADP(+) contacts are provided by valine 71, aspartate 125, aspartate 133, asparagine 152, tyrosine 219, lysine 223, isoleucine 252, and serine 254. Tyrosine 219 serves as the catalytic Proton donor. Lysine 223 acts as the Lowers pKa of active site Tyr in catalysis.

The protein belongs to the short-chain dehydrogenases/reductases (SDR) family.

It localises to the endoplasmic reticulum membrane. It catalyses the reaction a very-long-chain (3R)-3-hydroxyacyl-CoA + NADP(+) = a very-long-chain 3-oxoacyl-CoA + NADPH + H(+). It participates in lipid metabolism; fatty acid biosynthesis. Its function is as follows. Component of the microsomal membrane bound fatty acid elongation system, which produces the 26-carbon very long-chain fatty acids (VLCFA) from palmitate. Catalyzes the reduction of the 3-ketoacyl-CoA intermediate that is formed in each cycle of fatty acid elongation. VLCFAs serve as precursors for ceramide and sphingolipids. In Aspergillus fumigatus (strain CBS 144.89 / FGSC A1163 / CEA10) (Neosartorya fumigata), this protein is Very-long-chain 3-oxoacyl-CoA reductase.